A 117-amino-acid chain; its full sequence is Large ribosomal subunit protein bL20 (117 aa).

It belongs to the bacterial ribosomal protein bL20 family.

In terms of biological role, binds directly to 23S ribosomal RNA and is necessary for the in vitro assembly process of the 50S ribosomal subunit. It is not involved in the protein synthesizing functions of that subunit. This Campylobacter lari (strain RM2100 / D67 / ATCC BAA-1060) protein is Large ribosomal subunit protein bL20.